The primary structure comprises 196 residues: Endonuclease V (196 aa).

The Mg(2+) site is built by Asp37 and Asp98.

The protein belongs to the endonuclease V family. Mg(2+) serves as cofactor.

Its subcellular location is the cytoplasm. It catalyses the reaction Endonucleolytic cleavage at apurinic or apyrimidinic sites to products with a 5'-phosphate.. DNA repair enzyme involved in the repair of deaminated bases. Selectively cleaves double-stranded DNA at the second phosphodiester bond 3' to a deoxyinosine leaving behind the intact lesion on the nicked DNA. This chain is Endonuclease V, found in Sulfurisphaera tokodaii (strain DSM 16993 / JCM 10545 / NBRC 100140 / 7) (Sulfolobus tokodaii).